Reading from the N-terminus, the 360-residue chain is Actin-like protein MamK (360 aa).

ATP contacts are provided by residues lysine 22, 33–34, and aspartate 89; that span reads TS. Position 156 (glutamate 156) interacts with Mg(2+). Residues 177–179, 231–235, and glycine 302 each bind ATP; these read AGT and KEQFS.

This sequence belongs to the FtsA/MreB family. MamK subfamily. As to quaternary structure, forms cytoplasmic filaments. Interacts with MamJ. Forms filaments in the absence of other magnetosome proteins and in E.coli. Filament formation in vitro requires ATP, GTP or a non-hydrolyzable ATP analog.

The protein localises to the cytoplasm. It is found in the cytoskeleton. It catalyses the reaction ATP + H2O = ADP + phosphate + H(+). Its activity is regulated as follows. Filament dynamics depend partially on MamJ. Functionally, protein with ATPase activity which forms dynamic cytoplasmic filaments that are involved in sorting, concatenating and/or correctly positioning of magnetosomes in the cell. Not absolutely necessary for assembly of short chains. Filaments grow from the both cell poles towards midcell, and are probably disassembled at the other end of the cell, a process known as treadmilling. Polymerizes in the presence of ATP, GTP or a non-hydrolyzable ATP analog. Required for correct segregation and positioning of magnetosomes following cell division. The sequence is that of Actin-like protein MamK from Magnetospirillum gryphiswaldense (strain DSM 6361 / JCM 21280 / NBRC 15271 / MSR-1).